Here is a 504-residue protein sequence, read N- to C-terminus: Peroxisomal catalase (504 aa).

Catalysis depends on residues His-63 and Asn-136. Heme is bound at residue Tyr-345. The Microbody targeting signal motif lies at 502–504 (NKF).

It belongs to the catalase family. Heme serves as cofactor.

It localises to the peroxisome matrix. It carries out the reaction 2 H2O2 = O2 + 2 H2O. Catalyzes the degradation of hydrogen peroxide (H(2)O(2)) generated by peroxisomal oxidases to water and oxygen, thereby protecting cells from the toxic effects of hydrogen peroxide. In Candida boidinii (Yeast), this protein is Peroxisomal catalase (CTA1).